The following is a 158-amino-acid chain: uncharacterized protein (158 aa).

The HTH hxlR-type domain maps to 13–110 (ESVGRALELV…WGDEYLPRPE (98 aa)).

This is an uncharacterized protein from Mycobacterium tuberculosis (strain ATCC 25618 / H37Rv).